The following is a 461-amino-acid chain: Peptidyl-prolyl cis-trans isomerase-like 4 (461 aa).

A PPIase cyclophilin-type domain is found at 1–171; that stretch reads MSVLLETSLG…KDIRIRHTVI (171 aa). Residues 205-234 are a coiled coil; sequence EELDDNMDEESMEKLRREREARAQALTLEM. Positions 248-326 constitute an RRM domain; sequence NVLFVCKLNP…HRIHVDFSQS (79 aa). Residues 341-461 are disordered; that stretch reads KRSGQRGGFG…DERYRERRRR (121 aa). Basic and acidic residues-rich tracts occupy residues 365–384 and 398–461; these read DNAREKENDYTLVFDKGDKA and SNRD…RRRR.

The protein belongs to the cyclophilin-type PPIase family. PPIL4 subfamily.

The protein resides in the nucleus. It catalyses the reaction [protein]-peptidylproline (omega=180) = [protein]-peptidylproline (omega=0). Functionally, PPIases accelerate the folding of proteins. It catalyzes the cis-trans isomerization of proline imidic peptide bonds in oligopeptides. In Aspergillus oryzae (strain ATCC 42149 / RIB 40) (Yellow koji mold), this protein is Peptidyl-prolyl cis-trans isomerase-like 4 (cyp6).